A 394-amino-acid polypeptide reads, in one-letter code: Probable purine permease 23 (394 aa).

Positions 1 to 20 (MEMTEASKHTTTHEESEHVQ) are enriched in basic and acidic residues. A disordered region spans residues 1–24 (MEMTEASKHTTTHEESEHVQNPEP). Ser-29 bears the Phosphoserine mark. 10 consecutive transmembrane segments (helical) span residues 43–63 (ISVLICLFLVLLGDSLVILLL), 85–105 (WMQALIQNAAFPILIPLFFIF), 124–144 (LILLYFSLGVLVAAHSKLYAL), 152–172 (GFFMLISGSQLIFTLIFTAII), 180–200 (WIIISIVLILVSYAFGGPVFS), 211–231 (GIQAWLTFAASVAFALSLCLV), 254–274 (VLEMQICVSSVASVVCLVGLF), 301–321 (VGLALSWQVWAVGLIGLVLYV), 328–348 (IVHMCASPLMAFIVVLAFDFI), and 352–372 (FSWPRIGALIGSVLALGSYFY).

It belongs to the purine permeases (TC 2.A.7.14) family.

The protein localises to the membrane. This is Probable purine permease 23 (PUP23) from Arabidopsis thaliana (Mouse-ear cress).